The chain runs to 359 residues: Dihydroorotate dehydrogenase (quinone) (359 aa).

FMN is bound by residues 68 to 72 (AGFDK) and A92. K72 contributes to the substrate binding site. 117-121 (NAYGF) contacts substrate. Positions 146 and 179 each coordinate FMN. A substrate-binding site is contributed by N179. S182 serves as the catalytic Nucleophile. Substrate is bound at residue N184. Residues K215 and T243 each contribute to the FMN site. 244-245 (NT) is a binding site for substrate. Residues G263, G292, and 313–314 (YT) each bind FMN.

It belongs to the dihydroorotate dehydrogenase family. Type 2 subfamily. As to quaternary structure, monomer. FMN is required as a cofactor.

Its subcellular location is the cell membrane. The catalysed reaction is (S)-dihydroorotate + a quinone = orotate + a quinol. The protein operates within pyrimidine metabolism; UMP biosynthesis via de novo pathway; orotate from (S)-dihydroorotate (quinone route): step 1/1. In terms of biological role, catalyzes the conversion of dihydroorotate to orotate with quinone as electron acceptor. This is Dihydroorotate dehydrogenase (quinone) from Nautilia profundicola (strain ATCC BAA-1463 / DSM 18972 / AmH).